We begin with the raw amino-acid sequence, 469 residues long: 3-isopropylmalate dehydratase large subunit (469 aa).

Residues cysteine 350, cysteine 410, and cysteine 413 each contribute to the [4Fe-4S] cluster site.

This sequence belongs to the aconitase/IPM isomerase family. LeuC type 1 subfamily. Heterodimer of LeuC and LeuD. Requires [4Fe-4S] cluster as cofactor.

It carries out the reaction (2R,3S)-3-isopropylmalate = (2S)-2-isopropylmalate. The protein operates within amino-acid biosynthesis; L-leucine biosynthesis; L-leucine from 3-methyl-2-oxobutanoate: step 2/4. Catalyzes the isomerization between 2-isopropylmalate and 3-isopropylmalate, via the formation of 2-isopropylmaleate. The sequence is that of 3-isopropylmalate dehydratase large subunit from Rhizobium etli (strain CIAT 652).